We begin with the raw amino-acid sequence, 151 residues long: Large ribosomal subunit protein bL9 (151 aa).

Belongs to the bacterial ribosomal protein bL9 family.

Binds to the 23S rRNA. The chain is Large ribosomal subunit protein bL9 from Pseudothermotoga lettingae (strain ATCC BAA-301 / DSM 14385 / NBRC 107922 / TMO) (Thermotoga lettingae).